The following is a 574-amino-acid chain: Potassium-transporting ATPase potassium-binding subunit (574 aa).

A run of 10 helical transmembrane segments spans residues 7–27 (IELG…GTHL), 65–85 (IEYA…SYLI), 136–156 (FGLA…AAAL), 175–195 (LIRI…IILL), 264–284 (FVEM…FGLS), 292–312 (WSIW…CFIF), 390–410 (GLYG…LMIG), 427–447 (MAVL…ALAL), 494–514 (LLLG…ILAI), and 534–554 (GWLF…LNFF).

It belongs to the KdpA family. In terms of assembly, the system is composed of three essential subunits: KdpA, KdpB and KdpC.

The protein resides in the cell inner membrane. Part of the high-affinity ATP-driven potassium transport (or Kdp) system, which catalyzes the hydrolysis of ATP coupled with the electrogenic transport of potassium into the cytoplasm. This subunit binds the periplasmic potassium ions and delivers the ions to the membrane domain of KdpB through an intramembrane tunnel. This Methylacidiphilum infernorum (isolate V4) (Methylokorus infernorum (strain V4)) protein is Potassium-transporting ATPase potassium-binding subunit.